The following is a 328-amino-acid chain: uncharacterized protein (328 aa).

The interval 296 to 328 is disordered; the sequence is APEGDLEDEIIEVDPEQPRDDPYRRLRTPPPGG. Residues 299–310 show a composition bias toward acidic residues; sequence GDLEDEIIEVDP.

Possibly necessary for replication. This is an uncharacterized protein from Halobacterium sp. (strain GN101).